Reading from the N-terminus, the 529-residue chain is Peptide chain release factor 3 (529 aa).

Positions 11–280 (AKRRTFAIIS…GLVAWAPAPM (270 aa)) constitute a tr-type G domain. Residues 20–27 (SHPDAGKT), 88–92 (DTPGH), and 142–145 (NKLD) each bind GTP.

This sequence belongs to the TRAFAC class translation factor GTPase superfamily. Classic translation factor GTPase family. PrfC subfamily.

The protein localises to the cytoplasm. Increases the formation of ribosomal termination complexes and stimulates activities of RF-1 and RF-2. It binds guanine nucleotides and has strong preference for UGA stop codons. It may interact directly with the ribosome. The stimulation of RF-1 and RF-2 is significantly reduced by GTP and GDP, but not by GMP. The protein is Peptide chain release factor 3 of Salmonella agona (strain SL483).